A 203-amino-acid polypeptide reads, in one-letter code: Histone deacetylase HDT4 (203 aa).

Residues 2 to 5 are required to repress transcription; the sequence is EFWG. The interval 121-203 is disordered; the sequence is AALPQNEINP…PFPCGPSCKK (83 aa). Residues 129–157 show a composition bias toward acidic residues; the sequence is NPEEDDESDSDEMGLDEDDDSSDEEDVEA. Residues 180–193 show a composition bias toward basic residues; the sequence is GGKKNKSSGGKKRC.

Belongs to the histone deacetylase HD2 family. In terms of tissue distribution, confined to stems and flowers with young siliques.

The protein resides in the nucleus. The protein localises to the nucleolus. Functionally, probably mediates the deacetylation of lysine residues lysine residues on the N-terminal part of the core histones (H2A, H2B, H3 and H4). Histone deacetylation gives a tag for epigenetic repression and plays an important role in transcriptional regulation, cell cycle progression and developmental events. In Arabidopsis thaliana (Mouse-ear cress), this protein is Histone deacetylase HDT4 (HDT4).